Consider the following 492-residue polypeptide: Transmembrane protein 104 homolog (492 aa).

The Cytoplasmic portion of the chain corresponds to 1 to 17; that stretch reads MQSNTDSSTSGTYSQTV. The helical transmembrane segment at 18–38 threads the bilayer; that stretch reads GLLYVFNLIVGTGALALPKAF. Residues 39–44 lie on the Extracellular side of the membrane; it reads QTAGWL. Residues 45–65 traverse the membrane as a helical segment; the sequence is LSITLLTFSAFMSYVAATFVI. Topologically, residues 66–113 are cytoplasmic; the sequence is EALSVANAVLSKKRRVEYDDVVVADGPSTFEISKKVEVSEMASMFLSK. The helical transmembrane segment at 114–134 threads the bilayer; the sequence is VSLVFSYFAIIIYLFGDLAIY. The Extracellular segment spans residues 135-176; sequence STTVPKSAMNIVCATINASTVKSSDPCHESWPEILTRMTVYR. Asn-151 is a glycosylation site (N-linked (GlcNAc...) asparagine). Residues 177–197 traverse the membrane as a helical segment; the sequence is FFVIIFVVVVCLPMVIAGITK. Topologically, residues 198 to 209 are cytoplasmic; sequence TRHIQIMTTLSR. Residues 210–230 traverse the membrane as a helical segment; the sequence is WAAFILMISLATMQLSSDGAA. The Extracellular segment spans residues 231–237; that stretch reads AHPPAYN. The chain crosses the membrane as a helical span at residues 238–258; it reads FHGFGSLFGCAVYAFMCHHSI. The Cytoplasmic portion of the chain corresponds to 259–274; the sequence is PSLITPMRTKDNVFGK. Residues 275 to 295 form a helical membrane-spanning segment; it reads IALVYGVVGVFYFTLSLTGAF. Residues 296 to 324 lie on the Extracellular side of the membrane; that stretch reads AFEHVQDIYTLNFFHDGNTSFIYSIIDYF. Asn-313 is a glycosylation site (N-linked (GlcNAc...) asparagine). The helical transmembrane segment at 325 to 345 threads the bilayer; that stretch reads LALFPIITLTSSYPIIALTLI. Topologically, residues 346–392 are cytoplasmic; it reads NNFNVVKDILCPKVGQENESLLEADSLVEDNDTDDEREARNARNEKS. The helical transmembrane segment at 393-413 threads the bilayer; sequence VFDVLVPALVLALPTFLSLLT. The Extracellular segment spans residues 414–415; it reads DD. Residues 416 to 436 form a helical membrane-spanning segment; the sequence is MLLLASITGSFPGVAVQFAIP. The Cytoplasmic portion of the chain corresponds to 437-466; that stretch reads CLLVTAARKHARSVLNFPVPRKNNSPFQSP. The helical transmembrane segment at 467-487 threads the bilayer; it reads IWIVLISSWAGFSMIMVLLNL. The Extracellular portion of the chain corresponds to 488-492; sequence VGVKF.

Belongs to the TMEM104 family.

It localises to the membrane. The protein is Transmembrane protein 104 homolog of Caenorhabditis elegans.